Consider the following 187-residue polypeptide: Large ribosomal subunit protein bL12cx (187 aa).

The N-terminal 54 residues, M1–S54, are a transit peptide targeting the chloroplast.

The protein belongs to the bacterial ribosomal protein bL12 family.

The protein resides in the plastid. Its subcellular location is the chloroplast. This is Large ribosomal subunit protein bL12cx (RPL12C) from Arabidopsis thaliana (Mouse-ear cress).